The chain runs to 102 residues: uncharacterized protein (102 aa).

Residues cysteine 10, cysteine 16, and cysteine 55 each contribute to the [3Fe-4S] cluster site. Positions 66-102 are disordered; the sequence is DAGDDERASADPARSPAEAERHAAKDQRIPGGHDGTV. Over residues 82–93 the composition is skewed to basic and acidic residues; it reads AEAERHAAKDQR.

Requires [3Fe-4S] cluster as cofactor.

Functionally, electron transport protein for the cytochrome systems. This is an uncharacterized protein from Sinorhizobium fredii (strain NBRC 101917 / NGR234).